Consider the following 309-residue polypeptide: Tagatose-6-phosphate kinase (309 aa).

It belongs to the carbohydrate kinase PfkB family. LacC subfamily.

The catalysed reaction is D-tagatofuranose 6-phosphate + ATP = D-tagatofuranose 1,6-bisphosphate + ADP + H(+). The protein operates within carbohydrate metabolism; D-tagatose 6-phosphate degradation; D-glyceraldehyde 3-phosphate and glycerone phosphate from D-tagatose 6-phosphate: step 1/2. This Streptococcus pyogenes serotype M18 (strain MGAS8232) protein is Tagatose-6-phosphate kinase.